A 56-amino-acid polypeptide reads, in one-letter code: Large ribosomal subunit protein bL33 (56 aa).

Positions Met1 to Leu12 are enriched in basic and acidic residues. Positions Met1–Lys28 are disordered. Residues Thr15–Thr25 show a composition bias toward polar residues.

Belongs to the bacterial ribosomal protein bL33 family.

The polypeptide is Large ribosomal subunit protein bL33 (Cupriavidus necator (strain ATCC 17699 / DSM 428 / KCTC 22496 / NCIMB 10442 / H16 / Stanier 337) (Ralstonia eutropha)).